Here is an 807-residue protein sequence, read N- to C-terminus: Glycerol-3-phosphate acyltransferase (807 aa).

Residues 305–310 (CHRSHM) carry the HXXXXD motif motif.

It belongs to the GPAT/DAPAT family.

The protein localises to the cell inner membrane. It carries out the reaction sn-glycerol 3-phosphate + an acyl-CoA = a 1-acyl-sn-glycero-3-phosphate + CoA. It participates in phospholipid metabolism; CDP-diacylglycerol biosynthesis; CDP-diacylglycerol from sn-glycerol 3-phosphate: step 1/3. The chain is Glycerol-3-phosphate acyltransferase from Aliivibrio fischeri (strain MJ11) (Vibrio fischeri).